Consider the following 515-residue polypeptide: Maturase K (515 aa).

This sequence belongs to the intron maturase 2 family. MatK subfamily.

The protein resides in the plastid. Its subcellular location is the chloroplast. Functionally, usually encoded in the trnK tRNA gene intron. Probably assists in splicing its own and other chloroplast group II introns. The polypeptide is Maturase K (Pinus sibirica (Siberian pine)).